A 711-amino-acid chain; its full sequence is Zinc finger protein 175 (711 aa).

Residues Met-1–Pro-11 show a composition bias toward polar residues. The disordered stretch occupies residues Met-1–Gly-21. Residues Val-27–Gln-98 enclose the KRAB domain. The C2H2-type 1; atypical zinc-finger motif lies at Asp-279–His-301. A C2H2-type 2; atypical zinc finger spans residues His-307–His-329. The C2H2-type 3 zinc finger occupies Cys-335–His-357. The Nuclear localization signal motif lies at Arg-359 to Pro-362. 12 consecutive C2H2-type zinc fingers follow at residues Tyr-363–His-385, Tyr-391–His-413, Tyr-419–His-441, Tyr-447–His-469, Tyr-475–His-497, Tyr-503–His-525, His-531–His-553, Tyr-559–His-581, Tyr-587–His-609, Phe-615–His-637, Tyr-643–His-665, and Tyr-671–His-693.

It belongs to the krueppel C2H2-type zinc-finger protein family. As to expression, ubiquitous.

It localises to the cytoplasm. It is found in the nucleus. Functionally, down-regulates the expression of several chemokine receptors. Interferes with HIV-1 replication by suppressing Tat-induced viral LTR promoter activity. In Homo sapiens (Human), this protein is Zinc finger protein 175 (ZNF175).